Consider the following 1109-residue polypeptide: Carbamoyl phosphate synthase large chain (1109 aa).

The interval 1–402 is carboxyphosphate synthetic domain; it reads MPRRTDLTSV…ALQKAMRSID (402 aa). Residues R129, R169, G175, G176, E208, I210, E215, G241, V242, H243, Q285, and E299 each contribute to the ATP site. The ATP-grasp 1 domain maps to 133–328; that stretch reads KGVVERCGAE…IAKIAARLAV (196 aa). The Mg(2+) site is built by Q285, E299, and N301. Residues Q285, E299, and N301 each coordinate Mn(2+). Positions 403–548 are oligomerization domain; the sequence is KAGSTFHWRG…YHYSSYDAET (146 aa). Positions 549 to 956 are carbamoyl phosphate synthetic domain; sequence EVQPRDRPAV…AFAKSQAAAY (408 aa). The region spanning 678-876 is the ATP-grasp 2 domain; it reads GEVLVAAGLP…LAKAASLLMA (199 aa). The ATP site is built by R714, R760, L762, E767, G792, I793, H794, S795, Q835, and E847. Mg(2+) contacts are provided by Q835, E847, and N849. Residues Q835, E847, and N849 each coordinate Mn(2+). In terms of domain architecture, MGS-like spans 957–1102; the sequence is GGLPTSGRVF…QEHDAARAAR (146 aa). The allosteric domain stretch occupies residues 957-1109; that stretch reads GGLPTSGRVF…AARETEGVHA (153 aa).

Belongs to the CarB family. Composed of two chains; the small (or glutamine) chain promotes the hydrolysis of glutamine to ammonia, which is used by the large (or ammonia) chain to synthesize carbamoyl phosphate. Tetramer of heterodimers (alpha,beta)4. The cofactor is Mg(2+). Requires Mn(2+) as cofactor.

It catalyses the reaction hydrogencarbonate + L-glutamine + 2 ATP + H2O = carbamoyl phosphate + L-glutamate + 2 ADP + phosphate + 2 H(+). The enzyme catalyses hydrogencarbonate + NH4(+) + 2 ATP = carbamoyl phosphate + 2 ADP + phosphate + 2 H(+). Its pathway is amino-acid biosynthesis; L-arginine biosynthesis; carbamoyl phosphate from bicarbonate: step 1/1. It functions in the pathway pyrimidine metabolism; UMP biosynthesis via de novo pathway; (S)-dihydroorotate from bicarbonate: step 1/3. Its function is as follows. Large subunit of the glutamine-dependent carbamoyl phosphate synthetase (CPSase). CPSase catalyzes the formation of carbamoyl phosphate from the ammonia moiety of glutamine, carbonate, and phosphate donated by ATP, constituting the first step of 2 biosynthetic pathways, one leading to arginine and/or urea and the other to pyrimidine nucleotides. The large subunit (synthetase) binds the substrates ammonia (free or transferred from glutamine from the small subunit), hydrogencarbonate and ATP and carries out an ATP-coupled ligase reaction, activating hydrogencarbonate by forming carboxy phosphate which reacts with ammonia to form carbamoyl phosphate. The protein is Carbamoyl phosphate synthase large chain of Beutenbergia cavernae (strain ATCC BAA-8 / DSM 12333 / CCUG 43141 / JCM 11478 / NBRC 16432 / NCIMB 13614 / HKI 0122).